We begin with the raw amino-acid sequence, 1122 residues long: Desmoglein-2 (1122 aa).

Positions 1–28 are cleaved as a signal peptide; that stretch reads MARSPGDRCALLLLVQLLAVVCLDFGNG. Positions 29–54 are excised as a propeptide; it reads LHLEVFSPRNEGKPFPKHTHLVRQKR. Cadherin domains follow at residues 55 to 164, 165 to 277, 278 to 398, and 397 to 504; these read AWIT…EPVF, TQEV…IPVV, ENKM…SSVV, and VVSF…CPVL. Topologically, residues 55-618 are extracellular; that stretch reads AWITAPVALR…YDNYVGLGPA (564 aa). Residue N117 is glycosylated (N-linked (GlcNAc...) asparagine). N-linked (GlcNAc...) asparagine glycosylation is found at N314, N467, and N519. A helical membrane pass occupies residues 619-639; it reads AIALMILALLLLLLVPLLLLI. Residues 640 to 1122 are Cytoplasmic-facing; sequence CHCGGGAKGF…KHSTMQHSYS (483 aa). Residues S685, S706, S709, and S729 each carry the phosphoserine modification. Position 808 is a phosphothreonine (T808). Phosphoserine occurs at positions 810, 814, and 819. 6 Desmoglein repeat repeats span residues 885–916, 917–945, 946–971, 972–995, 996–1024, and 1025–1055; these read AYSS…ESSV, SSRQ…SYAK, GSAV…ERVY, APTS…ERVI, QPNG…ERES, and ILAP…ERIL. Residues 913–932 are disordered; the sequence is ESSVSSRQSQKVVPPPDPVA. Low complexity predominate over residues 914 to 924; the sequence is SSVSSRQSQKV. A disordered region spans residues 1089-1122; that stretch reads LPNLDLEESDRPNSTITTSSTRVTKHSTMQHSYS. A compositionally biased stretch (polar residues) spans 1100–1122; that stretch reads PNSTITTSSTRVTKHSTMQHSYS. Position 1122 is a phosphoserine (S1122).

Interacts with PKP2. Interacts with CTNNB1; the interaction promotes localization of CTNNB1 at cell junctions thus reducing its nuclear localization and subsequent transcription of CTNNB1/TCF-target genes. Palmitoylated by ZDHHC5 at the plasma membrane. Expressed in undifferentiated pluripotent stem cells, expression decreases during differentiation (at protein level). Expressed by embryonic stem cells, expression is reduced during differentiation (at protein level). Expressed at the apical-lateral cell membrane of kidney tubular epithelial cells (at protein level). Expressed in epidermis and heart (at protein level). Expressed in the brain, spleen, lung, liver skeletal muscle, kidney and testis.

Its subcellular location is the cell membrane. It is found in the cell junction. The protein localises to the desmosome. The protein resides in the cytoplasm. A component of desmosome cell-cell junctions which are required for positive regulation of cellular adhesion. Involved in the interaction of plaque proteins and intermediate filaments mediating cell-cell adhesion. Required for proliferation and viability of embryonic stem cells in the blastocyst, thereby crucial for progression of post-implantation embryonic development. Maintains pluripotency by regulating epithelial to mesenchymal transition/mesenchymal to epithelial transition (EMT/MET) via interacting with and sequestering CTNNB1 to sites of cell-cell contact, thereby reducing translocation of CTNNB1 to the nucleus and subsequent transcription of CTNNB1/TCF-target genes. Promotes pluripotency and the multi-lineage differentiation potential of hematopoietic stem cells. Plays a role in endothelial cell sprouting and elongation via mediating the junctional-association of cortical actin fibers and CDH5. Plays a role in limiting inflammatory infiltration and the apoptotic response to injury in kidney tubular epithelial cells, potentially via its role in maintaining cell-cell adhesion and the epithelial barrier. This chain is Desmoglein-2 (Dsg2), found in Mus musculus (Mouse).